Consider the following 394-residue polypeptide: Elongation factor Tu (394 aa).

One can recognise a tr-type G domain in the interval 10 to 204 (KPHVNIGTIG…AVDSYIPQPV (195 aa)). The tract at residues 19–26 (GHVDHGKT) is G1. Residue 19–26 (GHVDHGKT) participates in GTP binding. A Mg(2+)-binding site is contributed by Thr26. Residues 60-64 (GITIS) are G2. Residues 81-84 (DCPG) form a G3 region. GTP contacts are provided by residues 81 to 85 (DCPGH) and 136 to 139 (NKVD). The tract at residues 136–139 (NKVD) is G4. The interval 174-176 (SAL) is G5.

The protein belongs to the TRAFAC class translation factor GTPase superfamily. Classic translation factor GTPase family. EF-Tu/EF-1A subfamily. Monomer.

Its subcellular location is the cytoplasm. It carries out the reaction GTP + H2O = GDP + phosphate + H(+). GTP hydrolase that promotes the GTP-dependent binding of aminoacyl-tRNA to the A-site of ribosomes during protein biosynthesis. This Rickettsia canadensis (strain McKiel) protein is Elongation factor Tu.